The chain runs to 239 residues: U2 small nuclear ribonucleoprotein A' (239 aa).

LRR repeat units lie at residues Lys-19–Arg-40, Val-42–Lys-63, Arg-64–Val-85, and Asn-88–Ala-109. Positions Asn-122 to Val-160 constitute an LRRCT domain.

This sequence belongs to the U2 small nuclear ribonucleoprotein A family. In terms of assembly, belongs to the 40S cdc5-associated complex (or cwf complex), a spliceosome sub-complex reminiscent of a late-stage spliceosome composed of the U2, U5 and U6 snRNAs and at least brr2, cdc5, cwf2/prp3, cwf3/syf1, cwf4/syf3, cwf5/ecm2, spp42/cwf6, cwf7/spf27, cwf8, cwf9, cwf10, cwf11, cwf12, prp45/cwf13, cwf14, cwf15, cwf16, cwf17, cwf18, cwf19, cwf20, cwf21, cwf22, cwf23, cwf24, cwf25, cwf26, cyp7/cwf27, cwf28, cwf29/ist3, lea1, msl1, prp5/cwf1, prp10, prp12/sap130, prp17, prp22, sap61, sap62, sap114, sap145, slu7, smb1, smd1, smd3, smf1, smg1 and syf2.

It localises to the nucleus. Involved in pre-mRNA splicing. This protein is associated with sn-RNP U2. It helps the A' protein to bind stem loop IV of U2 snRNA. This is U2 small nuclear ribonucleoprotein A' (lea1) from Schizosaccharomyces pombe (strain 972 / ATCC 24843) (Fission yeast).